Here is a 200-residue protein sequence, read N- to C-terminus: Large ribosomal subunit protein uL4 (200 aa).

Residues 38–72 (GRQGSKQQKTRSDVSGGGKRPWRQKGTGRARAGTI) are disordered.

It belongs to the universal ribosomal protein uL4 family. In terms of assembly, part of the 50S ribosomal subunit.

Its function is as follows. One of the primary rRNA binding proteins, this protein initially binds near the 5'-end of the 23S rRNA. It is important during the early stages of 50S assembly. It makes multiple contacts with different domains of the 23S rRNA in the assembled 50S subunit and ribosome. In terms of biological role, forms part of the polypeptide exit tunnel. This Pseudomonas fluorescens (strain ATCC BAA-477 / NRRL B-23932 / Pf-5) protein is Large ribosomal subunit protein uL4.